The chain runs to 213 residues: BREX protein BrxA (213 aa).

Belongs to the BrxA family.

Functionally, BREX systems (bacteriophage exclusion) provide immunity against bacteriophage. A probably non-essential part of a type 1 BREX system which protects against dsDNA phage. This system allows phage adsorption but prevents phage DNA replication, without degradation of the phage DNA. Methylation of bacterial DNA by PglX guides self/non-self discrimination. When the brxA-brxB-brxC-pglX-pglZ-brxL genes are transformed into a susceptible E.coli strain (BW25113) they confer very high resistance to infection by bacteriophage VR7 and VpaE1, about 100-fold protection against lambda, T5 and T7 and no protection against RNA phage Qbeta, ssDNA phage M13 or dSDNA phage T4 and VR5. Glycosylated phage DNA is not susceptible to BREX. The BREX system does not confer resistance to lysogenic lambda phage, i.e. prophage that are integrated into the chromosomal DNA and then induced to form phage. This is BREX protein BrxA from Escherichia coli O9:H4 (strain HS).